The primary structure comprises 273 residues: Putative pyruvate, phosphate dikinase regulatory protein (273 aa).

153 to 160 serves as a coordination point for ADP; the sequence is GISRTSKT.

Belongs to the pyruvate, phosphate/water dikinase regulatory protein family. PDRP subfamily.

It carries out the reaction N(tele)-phospho-L-histidyl/L-threonyl-[pyruvate, phosphate dikinase] + ADP = N(tele)-phospho-L-histidyl/O-phospho-L-threonyl-[pyruvate, phosphate dikinase] + AMP + H(+). It catalyses the reaction N(tele)-phospho-L-histidyl/O-phospho-L-threonyl-[pyruvate, phosphate dikinase] + phosphate + H(+) = N(tele)-phospho-L-histidyl/L-threonyl-[pyruvate, phosphate dikinase] + diphosphate. In terms of biological role, bifunctional serine/threonine kinase and phosphorylase involved in the regulation of the pyruvate, phosphate dikinase (PPDK) by catalyzing its phosphorylation/dephosphorylation. The sequence is that of Putative pyruvate, phosphate dikinase regulatory protein from Agrobacterium fabrum (strain C58 / ATCC 33970) (Agrobacterium tumefaciens (strain C58)).